The following is a 282-amino-acid chain: Farnesyl diphosphate synthase (282 aa).

Isopentenyl diphosphate is bound by residues lysine 45, arginine 48, and histidine 77. Mg(2+)-binding residues include aspartate 84 and aspartate 90. Position 95 (arginine 95) interacts with (2E)-geranyl diphosphate. Isopentenyl diphosphate is bound at residue arginine 96. (2E)-geranyl diphosphate is bound by residues lysine 181, threonine 182, and glutamine 220.

Belongs to the FPP/GGPP synthase family. Mg(2+) serves as cofactor.

The protein localises to the cytoplasm. The enzyme catalyses isopentenyl diphosphate + (2E)-geranyl diphosphate = (2E,6E)-farnesyl diphosphate + diphosphate. This is Farnesyl diphosphate synthase (ispA) from Buchnera aphidicola subsp. Acyrthosiphon pisum (strain APS) (Acyrthosiphon pisum symbiotic bacterium).